Reading from the N-terminus, the 200-residue chain is Recombination protein RecR (200 aa).

A C4-type zinc finger spans residues 59–74 (CEICGNIDTRSPCTVC). Residues 82-177 (SIIVVVADVA…KVTRLAHGVP (96 aa)) enclose the Toprim domain.

The protein belongs to the RecR family.

Functionally, may play a role in DNA repair. It seems to be involved in an RecBC-independent recombinational process of DNA repair. It may act with RecF and RecO. This Nitrobacter hamburgensis (strain DSM 10229 / NCIMB 13809 / X14) protein is Recombination protein RecR.